Here is a 366-residue protein sequence, read N- to C-terminus: MRVILSGGGTGGHIYPAISIANKIKEQHPKAEILFIGTENGMESEIVPKAGYPIKYVTVSYLKRKISLHNVKSAAMLLKGIAEARKIIKEFKPDIVIGTGGFVCGPVLYMASKLGIRTMIHEQNVFPGLTNRILDRYVDRIALSFKDAEKYFKHKNKLVVTGNPIRSDFMEVTEVEASARYKTDSDLPLVLVVGGSGGALKINRAVVEILNQYQPNKYRLLLVTGKRLYKSTLESINAESLQSKHKVFAYVNDMPHALKACDLIVCSAGAITIAEVTAVGKASILIPKAHTAENHQEYNANAMGNKGAAVVIREDELSGEILNKKIQDIIGNIQVVKKMEAASYKEGIRDAADRIYSEMQALLERK.

Residues 10 to 12, N124, R166, S196, and Q296 each bind UDP-N-acetyl-alpha-D-glucosamine; that span reads TGG.

Belongs to the glycosyltransferase 28 family. MurG subfamily.

Its subcellular location is the cell membrane. It carries out the reaction di-trans,octa-cis-undecaprenyl diphospho-N-acetyl-alpha-D-muramoyl-L-alanyl-D-glutamyl-meso-2,6-diaminopimeloyl-D-alanyl-D-alanine + UDP-N-acetyl-alpha-D-glucosamine = di-trans,octa-cis-undecaprenyl diphospho-[N-acetyl-alpha-D-glucosaminyl-(1-&gt;4)]-N-acetyl-alpha-D-muramoyl-L-alanyl-D-glutamyl-meso-2,6-diaminopimeloyl-D-alanyl-D-alanine + UDP + H(+). It functions in the pathway cell wall biogenesis; peptidoglycan biosynthesis. In terms of biological role, cell wall formation. Catalyzes the transfer of a GlcNAc subunit on undecaprenyl-pyrophosphoryl-MurNAc-pentapeptide (lipid intermediate I) to form undecaprenyl-pyrophosphoryl-MurNAc-(pentapeptide)GlcNAc (lipid intermediate II). The polypeptide is UDP-N-acetylglucosamine--N-acetylmuramyl-(pentapeptide) pyrophosphoryl-undecaprenol N-acetylglucosamine transferase (Alkaliphilus oremlandii (strain OhILAs) (Clostridium oremlandii (strain OhILAs))).